Consider the following 332-residue polypeptide: 2,3-diketo-L-gulonate reductase (332 aa).

The active-site Proton donor is His44. NAD(+) is bound by residues 168–174, 224–225, and 304–306; these read ITMVDMS, WK, and GHE.

It belongs to the LDH2/MDH2 oxidoreductase family. DlgD subfamily. As to quaternary structure, homodimer.

Its subcellular location is the cytoplasm. It catalyses the reaction 3-dehydro-L-gulonate + NAD(+) = 2,3-dioxo-L-gulonate + NADH + H(+). It carries out the reaction 3-dehydro-L-gulonate + NADP(+) = 2,3-dioxo-L-gulonate + NADPH + H(+). Its function is as follows. Catalyzes the reduction of 2,3-diketo-L-gulonate in the presence of NADH, to form 3-keto-L-gulonate. In Klebsiella oxytoca, this protein is 2,3-diketo-L-gulonate reductase.